The primary structure comprises 759 residues: Protein transport protein sec23-1 (759 aa).

Residues cysteine 56, cysteine 60, cysteine 79, and cysteine 82 each coordinate Zn(2+).

Belongs to the SEC23/SEC24 family. SEC23 subfamily. In terms of assembly, the COPII coat is composed of at least 5 proteins: the sec23/24 complex, the sec13/31 complex, and the protein sar1.

The protein localises to the cytoplasm. Its subcellular location is the cytoplasmic vesicle. It is found in the COPII-coated vesicle membrane. It localises to the endoplasmic reticulum membrane. The protein resides in the golgi apparatus membrane. Its function is as follows. Component of the coat protein complex II (COPII) which promotes the formation of transport vesicles from the endoplasmic reticulum (ER). The coat has two main functions, the physical deformation of the endoplasmic reticulum membrane into vesicles and the selection of cargo molecules. This Schizosaccharomyces pombe (strain 972 / ATCC 24843) (Fission yeast) protein is Protein transport protein sec23-1 (sec231).